A 345-amino-acid chain; its full sequence is Phosphoribosylformylglycinamidine cyclo-ligase (345 aa).

Belongs to the AIR synthase family.

Its subcellular location is the cytoplasm. The enzyme catalyses 2-formamido-N(1)-(5-O-phospho-beta-D-ribosyl)acetamidine + ATP = 5-amino-1-(5-phospho-beta-D-ribosyl)imidazole + ADP + phosphate + H(+). The protein operates within purine metabolism; IMP biosynthesis via de novo pathway; 5-amino-1-(5-phospho-D-ribosyl)imidazole from N(2)-formyl-N(1)-(5-phospho-D-ribosyl)glycinamide: step 2/2. This is Phosphoribosylformylglycinamidine cyclo-ligase from Escherichia coli (strain SE11).